Here is a 219-residue protein sequence, read N- to C-terminus: 3-demethoxyubiquinol 3-hydroxylase (219 aa).

Positions 21–51 are disordered; it reads RTLTPGTTQAERTPAHAAPAPDAPEAGTLPS. The span at 35–46 shows a compositional bias: low complexity; sequence AHAAPAPDAPEA. Glu-68, Glu-98, His-101, Glu-150, Glu-182, and His-185 together coordinate Fe cation.

The protein belongs to the COQ7 family. Fe cation serves as cofactor.

The protein resides in the cell membrane. It catalyses the reaction a 5-methoxy-2-methyl-3-(all-trans-polyprenyl)benzene-1,4-diol + AH2 + O2 = a 3-demethylubiquinol + A + H2O. Its pathway is cofactor biosynthesis; ubiquinone biosynthesis. In terms of biological role, catalyzes the hydroxylation of 2-nonaprenyl-3-methyl-6-methoxy-1,4-benzoquinol during ubiquinone biosynthesis. This is 3-demethoxyubiquinol 3-hydroxylase from Alcanivorax borkumensis (strain ATCC 700651 / DSM 11573 / NCIMB 13689 / SK2).